Here is a 268-residue protein sequence, read N- to C-terminus: Putative type I specificity subunit S.MpnORF365P (268 aa).

The protein belongs to the type-I restriction system S methylase family. In terms of assembly, the methyltransferase is composed of M and S polypeptides.

The specificity (S) subunit of a type I methyltransferase (MTase); this subunit dictates DNA sequence specificity. The single R subunit has multiple frameshifts and is probably not expressed. The polypeptide is Putative type I specificity subunit S.MpnORF365P (Mycoplasma pneumoniae (strain ATCC 29342 / M129 / Subtype 1) (Mycoplasmoides pneumoniae)).